Consider the following 143-residue polypeptide: Large-conductance mechanosensitive channel (143 aa).

A run of 2 helical transmembrane segments spans residues 10–30 (FAVK…GAFS) and 89–109 (GSFI…FLMV).

This sequence belongs to the MscL family. Homopentamer.

The protein localises to the cell inner membrane. In terms of biological role, channel that opens in response to stretch forces in the membrane lipid bilayer. May participate in the regulation of osmotic pressure changes within the cell. The protein is Large-conductance mechanosensitive channel of Burkholderia multivorans (strain ATCC 17616 / 249).